The sequence spans 310 residues: Protoheme IX farnesyltransferase 2 (310 aa).

Transmembrane regions (helical) follow at residues 25–45 (PGII…AAKG), 49–69 (LVLM…GCAI), 98–118 (HVLL…ALFT), 121–141 (LALL…SLYM), 145–165 (SVYG…VGYC), 176–196 (VILL…IAIF), 222–242 (IVLY…AGYT), 245–265 (AFMA…LKGY), and 277–297 (QVFG…ALDF).

Belongs to the UbiA prenyltransferase family. Protoheme IX farnesyltransferase subfamily.

The protein localises to the cell inner membrane. It catalyses the reaction heme b + (2E,6E)-farnesyl diphosphate + H2O = Fe(II)-heme o + diphosphate. It participates in porphyrin-containing compound metabolism; heme O biosynthesis; heme O from protoheme: step 1/1. Functionally, converts heme B (protoheme IX) to heme O by substitution of the vinyl group on carbon 2 of heme B porphyrin ring with a hydroxyethyl farnesyl side group. This is Protoheme IX farnesyltransferase 2 from Shewanella sp. (strain MR-7).